The chain runs to 238 residues: Purine nucleoside phosphorylase DeoD-type (238 aa).

His4 is a binding site for a purine D-ribonucleoside. Phosphate-binding positions include Gly20, Arg24, Arg43, and Arg87 to Ser90. A purine D-ribonucleoside-binding positions include Glu179 to Glu181 and Ser203 to Asp204. Catalysis depends on Asp204, which acts as the Proton donor.

The protein belongs to the PNP/UDP phosphorylase family. In terms of assembly, homohexamer; trimer of homodimers.

It catalyses the reaction a purine D-ribonucleoside + phosphate = a purine nucleobase + alpha-D-ribose 1-phosphate. The enzyme catalyses a purine 2'-deoxy-D-ribonucleoside + phosphate = a purine nucleobase + 2-deoxy-alpha-D-ribose 1-phosphate. In terms of biological role, catalyzes the reversible phosphorolytic breakdown of the N-glycosidic bond in the beta-(deoxy)ribonucleoside molecules, with the formation of the corresponding free purine bases and pentose-1-phosphate. This chain is Purine nucleoside phosphorylase DeoD-type, found in Haemophilus ducreyi (strain 35000HP / ATCC 700724).